The chain runs to 488 residues: B-type flagellin (488 aa).

It belongs to the bacterial flagellin family. In terms of processing, phosphorylated on tyrosine residue(s).

It localises to the secreted. The protein resides in the bacterial flagellum. Its function is as follows. Flagellin is the subunit protein which polymerizes to form the filaments of bacterial flagella. The protein is B-type flagellin (fliC) of Pseudomonas aeruginosa (strain ATCC 15692 / DSM 22644 / CIP 104116 / JCM 14847 / LMG 12228 / 1C / PRS 101 / PAO1).